The chain runs to 459 residues: Probable Delta(5) fatty acid desaturase C (459 aa).

Positions 9-87 constitute a Cytochrome b5 heme-binding domain; it reads KKLYSWKEIS…LKQYEIGQVS (79 aa). The heme site is built by His-45 and His-68. Helical transmembrane passes span 121–141 and 151–171; these read FAFG…TSYY and FYLN…FSLH. The Histidine box-1 motif lies at 174 to 178; sequence HDACH. Residues 187-207 traverse the membrane as a helical segment; it reads VWKWLGATYDLFIGASFFYWC. The Histidine box-2 motif lies at 210 to 215; it reads HVIGHH. 2 helical membrane passes run 289–309 and 315–335; these read FEII…FIIP and LVNL…YLSF. A Histidine box-3 motif is present at residues 394–398; the sequence is QVVHH.

This sequence belongs to the fatty acid desaturase type 1 family. Fe cation is required as a cofactor.

Its subcellular location is the membrane. The polypeptide is Probable Delta(5) fatty acid desaturase C (Dictyostelium discoideum (Social amoeba)).